Here is a 327-residue protein sequence, read N- to C-terminus: DNA-directed RNA polymerase subunit alpha (327 aa).

The tract at residues 1 to 233 (MVREKVKVST…NLFIPFLHVE (233 aa)) is alpha N-terminal domain (alpha-NTD). The alpha C-terminal domain (alpha-CTD) stretch occupies residues 267 to 327 (LAFQYIFIDQ…KKILDILEKK (61 aa)).

The protein belongs to the RNA polymerase alpha chain family. In terms of assembly, in plastids the minimal PEP RNA polymerase catalytic core is composed of four subunits: alpha, beta, beta', and beta''. When a (nuclear-encoded) sigma factor is associated with the core the holoenzyme is formed, which can initiate transcription.

The protein resides in the plastid. The protein localises to the chloroplast. The enzyme catalyses RNA(n) + a ribonucleoside 5'-triphosphate = RNA(n+1) + diphosphate. DNA-dependent RNA polymerase catalyzes the transcription of DNA into RNA using the four ribonucleoside triphosphates as substrates. The chain is DNA-directed RNA polymerase subunit alpha from Nasturtium officinale (Watercress).